The following is a 230-amino-acid chain: uncharacterized protein (230 aa).

This sequence to E.coli HemX N-terminal region.

This is an uncharacterized protein from Haemophilus influenzae (strain ATCC 51907 / DSM 11121 / KW20 / Rd).